The primary structure comprises 380 residues: Cytochrome b (380 aa).

The next 4 helical transmembrane spans lie at 34–54 (FGSL…FLAM), 78–99 (WLLR…YMHI), 114–134 (WNIG…GYVL), and 179–199 (FFAF…VHLL). Positions 84 and 98 each coordinate heme b. His-183 and His-197 together coordinate heme b. His-202 contributes to the a ubiquinone binding site. A run of 4 helical transmembrane segments spans residues 227–247 (YKDV…ALFS), 289–309 (LGGV…PFVH), 321–341 (LAQV…WLGG), and 348–368 (YIFL…LLIP).

Belongs to the cytochrome b family. The cytochrome bc1 complex contains 3 respiratory subunits (MT-CYB, CYC1 and UQCRFS1), 2 core proteins (UQCRC1 and UQCRC2) and probably 6 low-molecular weight proteins. It depends on heme b as a cofactor.

It is found in the mitochondrion inner membrane. Its function is as follows. Component of the ubiquinol-cytochrome c reductase complex (complex III or cytochrome b-c1 complex) that is part of the mitochondrial respiratory chain. The b-c1 complex mediates electron transfer from ubiquinol to cytochrome c. Contributes to the generation of a proton gradient across the mitochondrial membrane that is then used for ATP synthesis. The polypeptide is Cytochrome b (MT-CYB) (Branchiostoma floridae (Florida lancelet)).